The sequence spans 130 residues: Small ribosomal subunit protein uS9 (130 aa).

It belongs to the universal ribosomal protein uS9 family.

This Shewanella baltica (strain OS155 / ATCC BAA-1091) protein is Small ribosomal subunit protein uS9.